A 598-amino-acid chain; its full sequence is Potassium voltage-gated channel subfamily A member 5 (598 aa).

The disordered stretch occupies residues 1–89; that stretch reads MEIALGPLEN…EEGEGDPGLS (89 aa). A tetramerization domain region spans residues 1-195; it reads MEIALGPLEN…FYQLGDEAME (195 aa). Over 1–231 the chain is Cytoplasmic; sequence MEIALGPLEN…LIFEYPESSG (231 aa). Positions 60-69 are enriched in pro residues; that stretch reads RPLPPQPPEL. Residue Lys-205 forms a Glycyl lysine isopeptide (Lys-Gly) (interchain with G-Cter in SUMO) linkage. Residues 232–253 traverse the membrane as a helical segment; sequence SARAIAIVSVLVILISIITFCL. Residues 254–308 are Extracellular-facing; that stretch reads ETLPEFKDERELLRHPPVPHQPPAAPALGANGSGAVAPASGSTVAPLLPRTLADP. A helical membrane pass occupies residues 309-330; the sequence is FFIVETTCVIWFTFELLVRFFA. A lipid anchor (S-palmitoyl cysteine) is attached at Cys-331. Residues 331-341 lie on the Cytoplasmic side of the membrane; it reads CPSKAEFSRNI. Residues 342-362 traverse the membrane as a helical segment; the sequence is MNIIDIVAIFPYFITLGTELA. At 363–380 the chain is on the extracellular side; it reads EQQPGGGGGGQNGQQAMS. Residues 381–401 form a helical; Voltage-sensor membrane-spanning segment; that stretch reads LAILRVIRLVRVFRIFKLSRH. Topologically, residues 402–416 are cytoplasmic; that stretch reads SKGLQILGKTLQASM. The tract at residues 403-416 is S4-S5 linker; sequence KGLQILGKTLQASM. Residues 417 to 438 traverse the membrane as a helical segment; that stretch reads RELGLLIFFLFIGVILFSSAVY. Residues 439–452 are Extracellular-facing; sequence FAEADNQGTHFSSI. Positions 453–464 form an intramembrane region, helical; sequence PDAFWWAVVTMT. Positions 465–470 match the Selectivity filter motif; it reads TVGYGD. The stretch at 465 to 472 is an intramembrane region; it reads TVGYGDMR. Residues 480 to 508 form a helical membrane-spanning segment; sequence IVGSLCAIAGVLTIALPVPVIVSNFNYFY. Residues 509-598 are Cytoplasmic-facing; it reads HRETDHEEQA…CLDTSRETDL (90 aa). The tract at residues 517–539 is disordered; it reads QAALKEEPGSQSRGTSLDAGGQR. Lys-521 participates in a covalent cross-link: Glycyl lysine isopeptide (Lys-Gly) (interchain with G-Cter in SUMO). A PDZ-binding motif is present at residues 596-598; the sequence is TDL.

The protein belongs to the potassium channel family. A (Shaker) (TC 1.A.1.2) subfamily. Kv1.5/KCNA5 sub-subfamily. As to quaternary structure, homotetramer and heterotetramer of potassium channel proteins. Interacts with DLG1, which enhances channel currents. Forms a ternary complex with DLG1 and CAV3. Interacts with KCNAB1. Interacts with UBE2I. Interacts with XIRP2; the interaction is required for normal action potential configuration in the heart. Glycosylated. In terms of processing, sumoylated on Lys-205, and Lys-521, preferentially with SUMO3. Sumoylation regulates the voltage sensitivity of the channel.

It localises to the cell membrane. It carries out the reaction K(+)(in) = K(+)(out). Its function is as follows. Voltage-gated potassium channel that mediates transmembrane potassium transport in excitable membranes. Forms tetrameric potassium-selective channels through which potassium ions pass in accordance with their electrochemical gradient. The channel alternates between opened and closed conformations in response to the voltage difference across the membrane. Can form functional homotetrameric channels and heterotetrameric channels that contain variable proportions of KCNA1, KCNA2, KCNA4, KCNA5, and possibly other family members as well; channel properties depend on the type of alpha subunits that are part of the channel. Channel properties are modulated by cytoplasmic beta subunits that regulate the subcellular location of the alpha subunits and promote rapid inactivation. Homotetrameric channels display rapid activation and slow inactivation. Required for normal electrical conduction including formation of the infranodal ventricular conduction system and normal action potential configuration, as a result of its interaction with XIRP2. May play a role in regulating the secretion of insulin in normal pancreatic islets. The polypeptide is Potassium voltage-gated channel subfamily A member 5 (KCNA5) (Oryctolagus cuniculus (Rabbit)).